A 307-amino-acid chain; its full sequence is Taste receptor type 2 member 41 (307 aa).

The Extracellular segment spans residues 1–7 (MQAALTA). The chain crosses the membrane as a helical span at residues 8-28 (FFMLFFSLLSLLGIAANGFIV). Over 29–40 (LVLGREWLQYGR) the chain is Cytoplasmic. A helical transmembrane segment spans residues 41 to 61 (LLPLDMILISLGVSRFCLQLV). The Extracellular portion of the chain corresponds to 62–88 (GTVYNFYYSAHKVEYSGGLSRQFFHLH). A helical transmembrane segment spans residues 89-109 (WHFLNLATFXFCSWLSVLFCV). Residues 110–129 (KXANITHPTFLWLKWRFPGW) lie on the Cytoplasmic side of the membrane. Residues 130-150 (VPWLLLGSVLISFIITLLLFW) traverse the membrane as a helical segment. Residues 151–183 (VNYPVYQEFLIRKFSGNMTYEWNTRIEMYYLPS) lie on the Extracellular side of the membrane. Asparagine 167 is a glycosylation site (N-linked (GlcNAc...) asparagine). A helical transmembrane segment spans residues 184–204 (LKLVIWSIPCSVFLVSIMLLI). Residues 205-234 (NSLRRHTWRMQHNGHSLQDPSTQAHTRAXK) are Cytoplasmic-facing. Residues 235–255 (SLISFLILYVLSFLSLIIDAT) traverse the membrane as a helical segment. Topologically, residues 256–264 (KFISMQNDF) are extracellular. Residues 265–285 (YWPWQTAVYLGVSVHPFILIF) traverse the membrane as a helical segment. At 286–307 (SNLKLRSVFWKLLLLARGFWVA) the chain is on the cytoplasmic side.

Belongs to the G-protein coupled receptor T2R family.

It localises to the membrane. Functionally, receptor that may play a role in the perception of bitterness and is gustducin-linked. May play a role in sensing the chemical composition of the gastrointestinal content. The activity of this receptor may stimulate alpha gustducin, mediate PLC-beta-2 activation and lead to the gating of TRPM5. The protein is Taste receptor type 2 member 41 (TAS2R41) of Pongo pygmaeus (Bornean orangutan).